The chain runs to 1232 residues: Anion exchange protein 3 (1232 aa).

The segment covering 1 to 11 has biased composition (pro residues); that stretch reads MANGVIPPPGG. Disordered stretches follow at residues 1–316 and 429–499; these read MANG…KLDR and NDDK…DSHR. Residues 1 to 708 lie on the Cytoplasmic side of the membrane; it reads MANGVIPPPG…DLRDALHSQC (708 aa). Residues 58 to 75 show a composition bias toward basic and acidic residues; sequence DPEKPSRSYSERDFEFHR. Composition is skewed to basic residues over residues 76–97 and 104–113; these read HTSH…KLRR and RHTRRKRKKE. A compositionally biased stretch (acidic residues) spans 134–152; the sequence is VDEEEEEEEEEEGESEAEP. A phosphoserine mark is found at Ser-167, Ser-170, Ser-175, and Ser-198. A compositionally biased stretch (basic and acidic residues) spans 267–279; it reads DDMKSHRLEDNPG. The span at 280 to 289 shows a compositional bias: basic residues; it reads VRRHLVKKPS. The residue at position 295 (Arg-295) is an Omega-N-methylarginine. Basic residues predominate over residues 305 to 316; sequence LRRKKKKKKLDR. A compositionally biased stretch (polar residues) spans 440–450; that stretch reads NPSSSSMNSVL. The span at 481–499 shows a compositional bias: basic and acidic residues; that stretch reads HDPDAKEKPLHMPGGDSHR. 5 consecutive transmembrane segments (helical) span residues 709–731, 737–774, 794–816, 826–847, and 893–910; these read VAAV…GLLG, LMGV…LLVF, VWVG…SFLV, IFAF…YKVF, and ALLS…AFFL. The tract at residues 709-1232 is membrane (anion exchange); the sequence is VAAVLFIYFA…DEYNELHMPV (524 aa). Topologically, residues 911 to 925 are cytoplasmic; the sequence is RKFRNSRFLGGKARR. Helical transmembrane passes span 926–946, 980–1002, 1028–1049, 1083–1128, and 1155–1191; these read IIGD…DYSI, PFPP…LIFM, LLLI…LTAA, VTGV…IQLS, and MHLF…TVPL. Cys-1165 carries S-palmitoyl cysteine lipidation.

The protein belongs to the anion exchanger (TC 2.A.31) family.

The protein localises to the cell membrane. It catalyses the reaction hydrogencarbonate(in) + chloride(out) = hydrogencarbonate(out) + chloride(in). Sodium-independent anion exchanger which mediates the electroneutral exchange of chloride for bicarbonate ions across the cell membrane. May be involved in the regulation of intracellular pH, and the modulation of cardiac action potential. In Plecturocebus moloch (Dusky titi monkey), this protein is Anion exchange protein 3 (SLC4A3).